The following is a 90-amino-acid chain: Progonadoliberin-1 (90 aa).

The N-terminal stretch at 1–21 (MILKLMAGILLLTVCLEGCSS) is a signal peptide. Glutamine 22 carries the pyrrolidone carboxylic acid modification. Glycine 31 carries the post-translational modification Glycine amide.

Belongs to the GnRH family. Post-translationally, the precursor is cleaved by ACE, which removes the Gly-Lys-Arg peptide at the C-terminus, leading to mature hormone. The mature form of Gonadoliberin-1 is also cleaved and degraded by ACE.

The protein resides in the secreted. Stimulates the secretion of gonadotropins; it stimulates the secretion of both luteinizing and follicle-stimulating hormones. In Mus musculus (Mouse), this protein is Progonadoliberin-1 (Gnrh1).